A 448-amino-acid chain; its full sequence is tRNA modification GTPase MnmE (448 aa).

(6S)-5-formyl-5,6,7,8-tetrahydrofolate is bound by residues arginine 24, glutamate 81, and lysine 120. Residues 216-373 (GLNVVLVGAP…LKRTLLREAG (158 aa)) form the TrmE-type G domain. Asparagine 226 is a K(+) binding site. GTP contacts are provided by residues 226 to 231 (NVGKSS), 245 to 251 (TDIAGTT), and 270 to 273 (DTAG). Serine 230 is a Mg(2+) binding site. K(+)-binding residues include threonine 245, isoleucine 247, and threonine 250. Threonine 251 contributes to the Mg(2+) binding site. Lysine 448 contacts (6S)-5-formyl-5,6,7,8-tetrahydrofolate.

It belongs to the TRAFAC class TrmE-Era-EngA-EngB-Septin-like GTPase superfamily. TrmE GTPase family. Homodimer. Heterotetramer of two MnmE and two MnmG subunits. It depends on K(+) as a cofactor.

The protein resides in the cytoplasm. In terms of biological role, exhibits a very high intrinsic GTPase hydrolysis rate. Involved in the addition of a carboxymethylaminomethyl (cmnm) group at the wobble position (U34) of certain tRNAs, forming tRNA-cmnm(5)s(2)U34. This is tRNA modification GTPase MnmE from Neisseria meningitidis serogroup C / serotype 2a (strain ATCC 700532 / DSM 15464 / FAM18).